The following is a 161-amino-acid chain: MATAYHNLSDYDYESVPCGKDLRIGIAVAEWNHNITEPLMKGAIDTLLEHGVSADNIIVQHVPGTFELTYASAYLAEQHEVDAVIAIGCVVRGDTPHFDYICQGVTQGITQLNVDGFVPVIFGVLTTETMLQAEERAGGKHGNKGTEAAVTALKMAGLERI.

5-amino-6-(D-ribitylamino)uracil-binding positions include tryptophan 31, threonine 65–glutamate 67, and cysteine 89–valine 91. Aspartate 94–threonine 95 contributes to the (2S)-2-hydroxy-3-oxobutyl phosphate binding site. The active-site Proton donor is the histidine 97. Residue phenylalanine 122 coordinates 5-amino-6-(D-ribitylamino)uracil. Arginine 136 lines the (2S)-2-hydroxy-3-oxobutyl phosphate pocket.

It belongs to the DMRL synthase family.

It catalyses the reaction (2S)-2-hydroxy-3-oxobutyl phosphate + 5-amino-6-(D-ribitylamino)uracil = 6,7-dimethyl-8-(1-D-ribityl)lumazine + phosphate + 2 H2O + H(+). The protein operates within cofactor biosynthesis; riboflavin biosynthesis; riboflavin from 2-hydroxy-3-oxobutyl phosphate and 5-amino-6-(D-ribitylamino)uracil: step 1/2. Functionally, catalyzes the formation of 6,7-dimethyl-8-ribityllumazine by condensation of 5-amino-6-(D-ribitylamino)uracil with 3,4-dihydroxy-2-butanone 4-phosphate. This is the penultimate step in the biosynthesis of riboflavin. In Porphyromonas gingivalis (strain ATCC 33277 / DSM 20709 / CIP 103683 / JCM 12257 / NCTC 11834 / 2561), this protein is 6,7-dimethyl-8-ribityllumazine synthase.